The chain runs to 303 residues: Hydroxyethylthiazole kinase (303 aa).

Polar residues predominate over residues 1-15 (MTTASTTPNSDTSNL). The interval 1–23 (MTTASTTPNSDTSNLHEVAPDDP) is disordered. Met-67 contributes to the substrate binding site. The ATP site is built by Arg-142 and Ser-206. Substrate is bound at residue Gly-233.

It belongs to the Thz kinase family. It depends on Mg(2+) as a cofactor.

It catalyses the reaction 5-(2-hydroxyethyl)-4-methylthiazole + ATP = 4-methyl-5-(2-phosphooxyethyl)-thiazole + ADP + H(+). It functions in the pathway cofactor biosynthesis; thiamine diphosphate biosynthesis; 4-methyl-5-(2-phosphoethyl)-thiazole from 5-(2-hydroxyethyl)-4-methylthiazole: step 1/1. Its function is as follows. Catalyzes the phosphorylation of the hydroxyl group of 4-methyl-5-beta-hydroxyethylthiazole (THZ). The polypeptide is Hydroxyethylthiazole kinase (Bifidobacterium animalis subsp. lactis (strain AD011)).